The chain runs to 432 residues: Maltoporin (432 aa).

An N-terminal signal peptide occupies residues 1-22 (MKKVSVIAAAVAATLAAGSAFA).

The protein belongs to the porin LamB (TC 1.B.3) family. Homotrimer formed of three 18-stranded antiparallel beta-barrels, containing three independent channels.

Its subcellular location is the cell outer membrane. The catalysed reaction is beta-maltose(in) = beta-maltose(out). Functionally, involved in the transport of maltose and maltodextrins. This chain is Maltoporin, found in Vibrio parahaemolyticus serotype O3:K6 (strain RIMD 2210633).